Reading from the N-terminus, the 38-residue chain is DNA binding protein ORF8 (38 aa).

Belongs to the microviridae J protein family.

It localises to the virion. The protein resides in the host cytoplasm. In terms of biological role, mediates ssDNA packaging into virion, it locates to the internal surface of the capsid, thereby displacing the internal scaffolding protein during virion formation. Additionally, protein ORF8 plays a role in viral attachment to the host cell. This chain is DNA binding protein ORF8, found in Spiroplasma melliferum (SpV4).